The following is a 371-amino-acid chain: Peptide chain release factor 2 (371 aa).

An N5-methylglutamine modification is found at Gln-252.

The protein belongs to the prokaryotic/mitochondrial release factor family. Post-translationally, methylated by PrmC. Methylation increases the termination efficiency of RF2.

Its subcellular location is the cytoplasm. Functionally, peptide chain release factor 2 directs the termination of translation in response to the peptide chain termination codons UGA and UAA. The sequence is that of Peptide chain release factor 2 from Staphylococcus epidermidis (strain ATCC 35984 / DSM 28319 / BCRC 17069 / CCUG 31568 / BM 3577 / RP62A).